We begin with the raw amino-acid sequence, 346 residues long: L-glyceraldehyde 3-phosphate reductase (346 aa).

Trp-33, Asp-61, Tyr-66, Ser-168, Gln-193, Thr-223, Leu-225, Gln-227, Lys-233, Ser-303, Gln-307, and Asn-311 together coordinate NADP(+).

This sequence belongs to the shaker potassium channel beta subunit family.

The catalysed reaction is a primary alcohol + NADP(+) = an aldehyde + NADPH + H(+). In terms of biological role, aldo-keto reductase that catalyzes the stereospecific, NADPH-dependent reduction of L-glyceraldehyde 3-phosphate (L-GAP) to L-glycerol 3-phosphate (L-G3P). The chain is L-glyceraldehyde 3-phosphate reductase from Escherichia coli O157:H7.